We begin with the raw amino-acid sequence, 701 residues long: MDLWNLSWFLFLDALLVISGLATPENFDVDGGMDQDIFDINEGLGLDLFEGDIRLDRAQIRNSIIGEKYRWPHTIPYVLEDSLEMNAKGVILNAFERYRLKTCIDFKPWAGETNYISVFKGSGCWSSVGNRRVGKQELSIGANCDRIATVQHEFLHALGFWHEQSRSDRDDYVRIMWDRILSGREHNFNTYSDDISDSLNVPYDYTSVMHYSKTAFQNGTEPTIVTRISDFEDVIGQRMDFSDSDLLKLNQLYNCSSSLSFMDSCSFELENVCGMIQSSGDNADWQRVSQVPRGPESDHSNMGQCQGSGFFMHFDSSSVNVGATAVLESRTLYPKRGFQCLQFYLYNSGSESDQLNIYIREYSADNVDGNLTLVEEIKEIPTGSWQLYHVTLKVTKKFRVVFEGRKGSGASLGGLSIDDINLSETRCPHHIWHIRNFTQFIGSPNGTLYSPPFYSSKGYAFQIYLNLAHVTNAGIYFHLISGANDDQLQWPCPWQQATMTLLDQNPDIRQRMSNQRSITTDPFMTTDNGNYFWDRPSKVGTVALFSNGTQFRRGGGYGTSAFITHERLKSRDFIKGDDVYILLTVEDISHLNSTQIQLTPAPSVQDLCSKTTCKNDGVCTVRDGKAECRCQSGEDWWYMGERCEKRGSTRDTIVIAVSSTVAVFALMLIITLVSVYCTRKKYRERMSSNRPNLTPQNQHAF.

An N-terminal signal peptide occupies residues 1–22 (MDLWNLSWFLFLDALLVISGLA). The propeptide occupies 23–61 (TPENFDVDGGMDQDIFDINEGLGLDLFEGDIRLDRAQIR). The Extracellular segment spans residues 23-652 (TPENFDVDGG…CEKRGSTRDT (630 aa)). Residues 62 to 256 (NSIIGEKYRW…LKLNQLYNCS (195 aa)) enclose the Peptidase M12A domain. 3 cysteine pairs are disulfide-bonded: Cys103/Cys255, Cys124/Cys144, and Cys265/Cys427. A Zn(2+)-binding site is contributed by His152. Glu153 is an active-site residue. Zn(2+)-binding residues include His156 and His162. N-linked (GlcNAc...) asparagine glycosylation is found at Asn218, Asn254, Asn370, Asn421, Asn436, Asn445, Asn547, and Asn592. In terms of domain architecture, MAM spans 260-429 (SFMDSCSFEL…INLSETRCPH (170 aa)). In terms of domain architecture, MATH spans 430–585 (HIWHIRNFTQ…GDDVYILLTV (156 aa)). O-linked (GalNAc...) serine glycosylation is present at Ser593. O-linked (GalNAc...) threonine glycans are attached at residues Thr594 and Thr599. Positions 595-607 (QIQLTPAPSVQDL) are required for proteolytic processing. O-linked (GalNAc...) serine glycosylation occurs at Ser603. The region spanning 604–644 (VQDLCSKTTCKNDGVCTVRDGKAECRCQSGEDWWYMGERCE) is the EGF-like domain. Cystine bridges form between Cys608–Cys619, Cys613–Cys628, and Cys630–Cys643. The chain crosses the membrane as a helical span at residues 653–673 (IVIAVSSTVAVFALMLIITLV). Residues 674 to 701 (SVYCTRKKYRERMSSNRPNLTPQNQHAF) lie on the Cytoplasmic side of the membrane. Thr694 bears the Phosphothreonine mark.

As to quaternary structure, homotetramer consisting of disulfide-linked beta subunits, or heterotetramer of two alpha and two beta subunits formed by non-covalent association of two disulfide-linked heterodimers. Interacts with MBL2 through its carbohydrate moiety. This interaction may inhibit its catalytic activity. Interacts with TSPAN8. It depends on Zn(2+) as a cofactor. Post-translationally, phosphorylated by PKC at multiple sites of its cytoplasmic part. Phosphorylation dcreases activity at the cell surface, leading to diminished substrate cleavage. N-glycosylated; contains high mannose and/or complex biantennary structures. In terms of processing, O-glycosylation protect the C-terminal region from proteolytic cleavage and diminish secretion, this seems to be specific to human. Post-translationally, proteolytically activated by trypsin in the intestinal lumen and kallikrein-related peptidases in other tissues. The major site of expression is the brush border membrane of small intestinal and kidney epithelial cells.

The protein resides in the cell membrane. The protein localises to the secreted. It catalyses the reaction Hydrolysis of proteins, including azocasein, and peptides. Hydrolysis of 5-His-|-Leu-6, 6-Leu-|-Cys-7, 14-Ala-|-Leu-15 and 19-Cys-|-Gly-20 bonds in insulin B chain.. Strongly inhibited by fetuin-A/AHSG. Functionally, membrane metallopeptidase that sheds many membrane-bound proteins. Exhibits a strong preference for acidic amino acids at the P1' position. Known substrates include: FGF19, VGFA, IL1B, IL18, procollagen I and III, E-cadherin, KLK7, gastrin, ADAM10, tenascin-C. The presence of several pro-inflammatory cytokine among substrates implicate MEP1B in inflammation. It is also involved in tissue remodeling due to its capability to degrade extracellular matrix components. Also cleaves the amyloid precursor protein/APP, thereby releasing neurotoxic amyloid beta peptides. The sequence is that of Meprin A subunit beta (MEP1B) from Homo sapiens (Human).